The following is a 529-amino-acid chain: Bifunctional purine biosynthesis protein PurH (529 aa).

Positions 1–148 (MTNRNVIKNV…KNYKNVLVVT (148 aa)) constitute an MGS-like domain.

Belongs to the PurH family.

It carries out the reaction (6R)-10-formyltetrahydrofolate + 5-amino-1-(5-phospho-beta-D-ribosyl)imidazole-4-carboxamide = 5-formamido-1-(5-phospho-D-ribosyl)imidazole-4-carboxamide + (6S)-5,6,7,8-tetrahydrofolate. The enzyme catalyses IMP + H2O = 5-formamido-1-(5-phospho-D-ribosyl)imidazole-4-carboxamide. The protein operates within purine metabolism; IMP biosynthesis via de novo pathway; 5-formamido-1-(5-phospho-D-ribosyl)imidazole-4-carboxamide from 5-amino-1-(5-phospho-D-ribosyl)imidazole-4-carboxamide (10-formyl THF route): step 1/1. Its pathway is purine metabolism; IMP biosynthesis via de novo pathway; IMP from 5-formamido-1-(5-phospho-D-ribosyl)imidazole-4-carboxamide: step 1/1. The protein is Bifunctional purine biosynthesis protein PurH of Buchnera aphidicola subsp. Baizongia pistaciae (strain Bp).